The sequence spans 152 residues: Ribosome maturation factor RimP (152 aa).

This sequence belongs to the RimP family.

The protein resides in the cytoplasm. Functionally, required for maturation of 30S ribosomal subunits. This is Ribosome maturation factor RimP from Ruminiclostridium cellulolyticum (strain ATCC 35319 / DSM 5812 / JCM 6584 / H10) (Clostridium cellulolyticum).